Reading from the N-terminus, the 452-residue chain is tRNA modification GTPase MnmE (452 aa).

Residues Arg25, Glu82, and Arg125 each contribute to the (6S)-5-formyl-5,6,7,8-tetrahydrofolate site. The TrmE-type G domain maps to 221 to 374 (GLHVVLAGKP…LRARLLALAG (154 aa)). K(+) is bound at residue Asn231. Residues 231–236 (NVGKSS), 250–256 (TPIAGTT), 275–278 (DTAG), and 355–357 (SAR) each bind GTP. Ser235 is a binding site for Mg(2+). K(+) is bound by residues Thr250, Ile252, and Thr255. Thr256 lines the Mg(2+) pocket. Position 452 (Lys452) interacts with (6S)-5-formyl-5,6,7,8-tetrahydrofolate.

This sequence belongs to the TRAFAC class TrmE-Era-EngA-EngB-Septin-like GTPase superfamily. TrmE GTPase family. In terms of assembly, homodimer. Heterotetramer of two MnmE and two MnmG subunits. It depends on K(+) as a cofactor.

Its subcellular location is the cytoplasm. Functionally, exhibits a very high intrinsic GTPase hydrolysis rate. Involved in the addition of a carboxymethylaminomethyl (cmnm) group at the wobble position (U34) of certain tRNAs, forming tRNA-cmnm(5)s(2)U34. This is tRNA modification GTPase MnmE from Bordetella petrii (strain ATCC BAA-461 / DSM 12804 / CCUG 43448).